We begin with the raw amino-acid sequence, 2754 residues long: Neurobeachin-like protein 2 (2754 aa).

Disordered stretches follow at residues 1298 to 1338 (TAGS…SEAP) and 1364 to 1438 (SVGS…QQTS). Composition is skewed to pro residues over residues 1301–1323 (SPPP…PPTE) and 1388–1400 (TPSP…PFPA). The span at 1425 to 1437 (GDDTSNTSNPQQT) shows a compositional bias: polar residues. Residue Ser-1647 is modified to Phosphoserine. The residue at position 1867 (Thr-1867) is a Phosphothreonine. A BEACH-type PH domain is found at 1915–2040 (EQREKLVLSA…VRNQVYSWLL (126 aa)). A BEACH domain is found at 2053–2345 (RSPQEMLRAS…QLLKEPHPTR (293 aa)). 7 WD repeats span residues 2386 to 2424 (LVLA…SWLP), 2448 to 2491 (RLLS…ALPR), 2494 to 2531 (LLSQ…VWRL), 2544 to 2582 (KPVQ…IHTV), 2589 to 2631 (AALR…TYSL), 2639 to 2674 (KLRA…ILQL), and 2682 to 2717 (PPLP…VVAG). 2 positions are modified to phosphoserine: Ser-2739 and Ser-2742.

The protein belongs to the WD repeat neurobeachin family. In terms of tissue distribution, expressed in megakaryocytes.

The protein localises to the endoplasmic reticulum. In terms of biological role, probably involved in thrombopoiesis. Plays a role in the development or secretion of alpha-granules, that contain several growth factors important for platelet biogenesis. In Homo sapiens (Human), this protein is Neurobeachin-like protein 2 (NBEAL2).